Reading from the N-terminus, the 349-residue chain is Micronemal protein 6 (349 aa).

The signal sequence occupies residues 1–23 (MRLFRCCAAAVVAAESLLWLKNG). EGF-like domains follow at residues 36-80 (IADN…VTCM), 96-134 (TPAA…SLDG), and 147-192 (GCEE…ITCK). Cystine bridges form between cysteine 40–cysteine 53, cysteine 45–cysteine 62, cysteine 64–cysteine 79, cysteine 100–cysteine 113, cysteine 105–cysteine 122, cysteine 124–cysteine 140, cysteine 148–cysteine 162, cysteine 153–cysteine 173, and cysteine 175–cysteine 191. A disordered region spans residues 194 to 291 (VPPHYRKPPF…EEGSGHAGAI (98 aa)). Residues 204–283 (EFGKGGHPVD…SEEQGKEREE (80 aa)) form an acidic domain region. 2 stretches are compositionally biased toward basic and acidic residues: residues 210–247 (HPVD…RTPL) and 276–285 (EQGKEREEGS). A helical membrane pass occupies residues 290–310 (AIAGGVIGGLLLLSAAGAGVA).

Interacts directly with MIC1. Part of the MIC6-MIC1-MIC4 complex. In terms of processing, subject to proteolytic processing involving both the N-terminus and the C-terminus. The first EGF-like domain (EGF-like domain 1) is removed by proteolytic cleavage by ASP3 and is not present in the mature protein. Released as soluble 35 kDa protein after proteolytic processing at the C-terminus.

It is found in the cytoplasmic vesicle. The protein localises to the secretory vesicle. It localises to the microneme membrane. The protein resides in the secreted. Escorter protein required for import of MIC1 and MIC4 adhesins into the microneme. This Toxoplasma gondii protein is Micronemal protein 6.